Reading from the N-terminus, the 300-residue chain is Ribosomal protein bS6--L-glutamate ligase (300 aa).

The ATP-grasp domain maps to M104–E287. ATP-binding positions include K141, E178–Y179, D187, and R211–N213. Mg(2+)-binding residues include D248, E260, and N262. The Mn(2+) site is built by D248, E260, and N262.

The protein belongs to the RimK family. Mg(2+) is required as a cofactor. Mn(2+) serves as cofactor.

An L-glutamate ligase that catalyzes the ATP-dependent post-translational addition of glutamate residues to the C-terminus of ribosomal protein bS6 (RpsF). Is also able to catalyze the synthesis of poly-alpha-glutamate in vitro, via ATP hydrolysis from unprotected glutamate as substrate. The number of glutamate residues added to either RpsF or to poly-alpha-glutamate changes with pH. In Shigella boydii serotype 18 (strain CDC 3083-94 / BS512), this protein is Ribosomal protein bS6--L-glutamate ligase.